Here is a 180-residue protein sequence, read N- to C-terminus: Crossover junction endodeoxyribonuclease RuvC (180 aa).

Residues D7, E66, and D138 contribute to the active site. Residues D7, E66, and D138 each contribute to the Mg(2+) site.

It belongs to the RuvC family. Homodimer which binds Holliday junction (HJ) DNA. The HJ becomes 2-fold symmetrical on binding to RuvC with unstacked arms; it has a different conformation from HJ DNA in complex with RuvA. In the full resolvosome a probable DNA-RuvA(4)-RuvB(12)-RuvC(2) complex forms which resolves the HJ. It depends on Mg(2+) as a cofactor.

It localises to the cytoplasm. The catalysed reaction is Endonucleolytic cleavage at a junction such as a reciprocal single-stranded crossover between two homologous DNA duplexes (Holliday junction).. Its function is as follows. The RuvA-RuvB-RuvC complex processes Holliday junction (HJ) DNA during genetic recombination and DNA repair. Endonuclease that resolves HJ intermediates. Cleaves cruciform DNA by making single-stranded nicks across the HJ at symmetrical positions within the homologous arms, yielding a 5'-phosphate and a 3'-hydroxyl group; requires a central core of homology in the junction. The consensus cleavage sequence is 5'-(A/T)TT(C/G)-3'. Cleavage occurs on the 3'-side of the TT dinucleotide at the point of strand exchange. HJ branch migration catalyzed by RuvA-RuvB allows RuvC to scan DNA until it finds its consensus sequence, where it cleaves and resolves the cruciform DNA. This is Crossover junction endodeoxyribonuclease RuvC from Herminiimonas arsenicoxydans.